The sequence spans 249 residues: Triosephosphate isomerase (249 aa).

Asn-12 and Lys-14 together coordinate substrate. Lys-14 is modified (N6-acetyllysine). The residue at position 68 (Tyr-68) is a 3'-nitrotyrosine. Position 80 is a phosphoserine (Ser-80). His-96 (electrophile) is an active-site residue. Residue Ser-106 is modified to Phosphoserine. A Glycyl lysine isopeptide (Lys-Gly) (interchain with G-Cter in SUMO1) cross-link involves residue Lys-142. Lys-149 bears the N6-succinyllysine mark. The residue at position 156 (Lys-156) is an N6-acetyllysine; alternate. Position 156 is an N6-succinyllysine; alternate (Lys-156). Ser-159 bears the Phosphoserine mark. Catalysis depends on Glu-166, which acts as the Proton acceptor. Thr-173 carries the post-translational modification Phosphothreonine. The residue at position 194 (Lys-194) is an N6-acetyllysine; alternate. Lys-194 bears the N6-succinyllysine; alternate mark. Lys-194 carries the N6-methyllysine; alternate modification. A Phosphoserine modification is found at Ser-198. Position 209 is a 3'-nitrotyrosine (Tyr-209). Ser-212 is modified (phosphoserine). Phosphothreonine is present on Thr-214. At Ser-223 the chain carries Phosphoserine. Lys-238 is subject to N6-acetyllysine.

This sequence belongs to the triosephosphate isomerase family. Homodimer.

It localises to the cytoplasm. It catalyses the reaction dihydroxyacetone phosphate = methylglyoxal + phosphate. It carries out the reaction D-glyceraldehyde 3-phosphate = dihydroxyacetone phosphate. It functions in the pathway carbohydrate degradation; glycolysis; D-glyceraldehyde 3-phosphate from glycerone phosphate: step 1/1. The protein operates within carbohydrate biosynthesis; gluconeogenesis. Its function is as follows. Triosephosphate isomerase is an extremely efficient metabolic enzyme that catalyzes the interconversion between dihydroxyacetone phosphate (DHAP) and D-glyceraldehyde-3-phosphate (G3P) in glycolysis and gluconeogenesis. Functionally, it is also responsible for the non-negligible production of methylglyoxal a reactive cytotoxic side-product that modifies and can alter proteins, DNA and lipids. This is Triosephosphate isomerase (TPI1) from Macaca fascicularis (Crab-eating macaque).